We begin with the raw amino-acid sequence, 101 residues long: NADH-quinone oxidoreductase subunit K (101 aa).

Transmembrane regions (helical) follow at residues 4–24, 30–50, and 61–81; these read LSHY…GIFL, IVLL…FIAF, and VFVF…LAIL.

Belongs to the complex I subunit 4L family. In terms of assembly, NDH-1 is composed of 14 different subunits. Subunits NuoA, H, J, K, L, M, N constitute the membrane sector of the complex.

The protein localises to the cell inner membrane. It catalyses the reaction a quinone + NADH + 5 H(+)(in) = a quinol + NAD(+) + 4 H(+)(out). In terms of biological role, NDH-1 shuttles electrons from NADH, via FMN and iron-sulfur (Fe-S) centers, to quinones in the respiratory chain. The immediate electron acceptor for the enzyme in this species is believed to be ubiquinone. Couples the redox reaction to proton translocation (for every two electrons transferred, four hydrogen ions are translocated across the cytoplasmic membrane), and thus conserves the redox energy in a proton gradient. The sequence is that of NADH-quinone oxidoreductase subunit K from Azoarcus sp. (strain BH72).